The chain runs to 537 residues: Eukaryotic translation initiation factor 3 subunit L (537 aa).

Positions 1-19 (MSRRVEFDLSTEDHSDRRR) are enriched in basic and acidic residues. A disordered region spans residues 1-30 (MSRRVEFDLSTEDHSDRRRTNTFSSSADED). The PCI domain occupies 299–487 (EATKMFVNCL…GPSSADDDEP (189 aa)).

It belongs to the eIF-3 subunit L family. Component of the eukaryotic translation initiation factor 3 (eIF-3) complex.

The protein localises to the cytoplasm. In terms of biological role, component of the eukaryotic translation initiation factor 3 (eIF-3) complex, which is involved in protein synthesis of a specialized repertoire of mRNAs and, together with other initiation factors, stimulates binding of mRNA and methionyl-tRNAi to the 40S ribosome. The eIF-3 complex specifically targets and initiates translation of a subset of mRNAs involved in cell proliferation. The chain is Eukaryotic translation initiation factor 3 subunit L from Caenorhabditis elegans.